The primary structure comprises 260 residues: NAD kinase (260 aa).

Catalysis depends on Asp54, which acts as the Proton acceptor. NAD(+) contacts are provided by residues 54-55, 123-124, Arg150, Asp152, and 163-168; these read DG, ND, and TAYSLS.

The protein belongs to the NAD kinase family. A divalent metal cation serves as cofactor.

It localises to the cytoplasm. It carries out the reaction NAD(+) + ATP = ADP + NADP(+) + H(+). In terms of biological role, involved in the regulation of the intracellular balance of NAD and NADP, and is a key enzyme in the biosynthesis of NADP. Catalyzes specifically the phosphorylation on 2'-hydroxyl of the adenosine moiety of NAD to yield NADP. The sequence is that of NAD kinase from Caldicellulosiruptor saccharolyticus (strain ATCC 43494 / DSM 8903 / Tp8T 6331).